Consider the following 430-residue polypeptide: Adenylosuccinate synthetase (430 aa).

Residues 12–18 (GDEGKGK) and 40–42 (GHT) contribute to the GTP site. The active-site Proton acceptor is the Asp13. Residues Asp13 and Gly40 each coordinate Mg(2+). IMP is bound by residues 13 to 16 (DEGK), 38 to 41 (NAGH), Thr128, Arg142, Gln223, Thr238, and Arg302. Catalysis depends on His41, which acts as the Proton donor. 298 to 304 (TTTGRPR) contributes to the substrate binding site. GTP is bound by residues Arg304, 330–332 (LLD), and 412–414 (SVG).

It belongs to the adenylosuccinate synthetase family. In terms of assembly, homodimer. The cofactor is Mg(2+).

It localises to the cytoplasm. The enzyme catalyses IMP + L-aspartate + GTP = N(6)-(1,2-dicarboxyethyl)-AMP + GDP + phosphate + 2 H(+). The protein operates within purine metabolism; AMP biosynthesis via de novo pathway; AMP from IMP: step 1/2. Functionally, plays an important role in the de novo pathway of purine nucleotide biosynthesis. Catalyzes the first committed step in the biosynthesis of AMP from IMP. In Listeria monocytogenes serotype 4a (strain HCC23), this protein is Adenylosuccinate synthetase.